Consider the following 125-residue polypeptide: Protein ApaG (125 aa).

The ApaG domain occupies 1–125; sequence MINSPRVCIQ…FRLAVPTLIH (125 aa).

The sequence is that of Protein ApaG from Escherichia coli (strain SE11).